Consider the following 257-residue polypeptide: Thiazole synthase (257 aa).

The Schiff-base intermediate with DXP role is filled by Lys98. 1-deoxy-D-xylulose 5-phosphate-binding positions include Gly159, 185–186, and 207–208; these read AG and NT.

It belongs to the ThiG family. Homotetramer. Forms heterodimers with either ThiH or ThiS.

The protein localises to the cytoplasm. It carries out the reaction [ThiS sulfur-carrier protein]-C-terminal-Gly-aminoethanethioate + 2-iminoacetate + 1-deoxy-D-xylulose 5-phosphate = [ThiS sulfur-carrier protein]-C-terminal Gly-Gly + 2-[(2R,5Z)-2-carboxy-4-methylthiazol-5(2H)-ylidene]ethyl phosphate + 2 H2O + H(+). It functions in the pathway cofactor biosynthesis; thiamine diphosphate biosynthesis. Catalyzes the rearrangement of 1-deoxy-D-xylulose 5-phosphate (DXP) to produce the thiazole phosphate moiety of thiamine. Sulfur is provided by the thiocarboxylate moiety of the carrier protein ThiS. In vitro, sulfur can be provided by H(2)S. This is Thiazole synthase from Anaeromyxobacter dehalogenans (strain 2CP-1 / ATCC BAA-258).